The chain runs to 177 residues: Peptide methionine sulfoxide reductase MsrA (177 aa).

Cys11 is a catalytic residue.

Belongs to the MsrA Met sulfoxide reductase family.

It carries out the reaction L-methionyl-[protein] + [thioredoxin]-disulfide + H2O = L-methionyl-(S)-S-oxide-[protein] + [thioredoxin]-dithiol. The enzyme catalyses [thioredoxin]-disulfide + L-methionine + H2O = L-methionine (S)-S-oxide + [thioredoxin]-dithiol. In terms of biological role, has an important function as a repair enzyme for proteins that have been inactivated by oxidation. Catalyzes the reversible oxidation-reduction of methionine sulfoxide in proteins to methionine. This is Peptide methionine sulfoxide reductase MsrA from Picrophilus torridus (strain ATCC 700027 / DSM 9790 / JCM 10055 / NBRC 100828 / KAW 2/3).